Reading from the N-terminus, the 261-residue chain is Glutamate 5-kinase (261 aa).

K7 contacts ATP. Substrate is bound by residues S46, D131, and N147. Residues 167-168 (SD) and 209-215 (TGGIVTK) contribute to the ATP site.

Belongs to the glutamate 5-kinase family.

The protein resides in the cytoplasm. It catalyses the reaction L-glutamate + ATP = L-glutamyl 5-phosphate + ADP. Its pathway is amino-acid biosynthesis; L-proline biosynthesis; L-glutamate 5-semialdehyde from L-glutamate: step 1/2. In terms of biological role, catalyzes the transfer of a phosphate group to glutamate to form L-glutamate 5-phosphate. In Wolinella succinogenes (strain ATCC 29543 / DSM 1740 / CCUG 13145 / JCM 31913 / LMG 7466 / NCTC 11488 / FDC 602W) (Vibrio succinogenes), this protein is Glutamate 5-kinase.